The primary structure comprises 1062 residues: Carbamoyl phosphate synthase large chain (1062 aa).

Residues 1–401 (MPKRTDIHKI…AMQKAVRSLE (401 aa)) form a carboxyphosphate synthetic domain region. 12 residues coordinate ATP: Arg129, Arg169, Gly175, Gly176, Lys208, Ile210, Glu215, Gly241, Ile242, His243, Gln284, and Glu298. One can recognise an ATP-grasp 1 domain in the interval 133–327 (KELCKELGEP…IAKMAAKIAI (195 aa)). Mg(2+)-binding residues include Gln284, Glu298, and Asn300. Mn(2+) contacts are provided by Gln284, Glu298, and Asn300. The segment at 402–546 (IDEKDLYSET…YSTYDGENES (145 aa)) is oligomerization domain. The carbamoyl phosphate synthetic domain stretch occupies residues 547–929 (HKSGKKSVIV…ALYKAFAGAK (383 aa)). The ATP-grasp 2 domain maps to 671–861 (DQIIKKLKLN…MAQVATRVIM (191 aa)). ATP is bound by residues Arg707, Asp746, Leu748, Glu752, Gly777, Val778, His779, Ser780, Gln820, and Glu832. Residues Gln820, Glu832, and Asn834 each contribute to the Mg(2+) site. Residues Gln820, Glu832, and Asn834 each contribute to the Mn(2+) site. The MGS-like domain maps to 930 to 1062 (MQLPENGNVL…NRSFATDALK (133 aa)). An allosteric domain region spans residues 930 to 1062 (MQLPENGNVL…NRSFATDALK (133 aa)).

This sequence belongs to the CarB family. As to quaternary structure, composed of two chains; the small (or glutamine) chain promotes the hydrolysis of glutamine to ammonia, which is used by the large (or ammonia) chain to synthesize carbamoyl phosphate. Tetramer of heterodimers (alpha,beta)4. The cofactor is Mg(2+). Mn(2+) serves as cofactor.

It carries out the reaction hydrogencarbonate + L-glutamine + 2 ATP + H2O = carbamoyl phosphate + L-glutamate + 2 ADP + phosphate + 2 H(+). The enzyme catalyses hydrogencarbonate + NH4(+) + 2 ATP = carbamoyl phosphate + 2 ADP + phosphate + 2 H(+). It functions in the pathway amino-acid biosynthesis; L-arginine biosynthesis; carbamoyl phosphate from bicarbonate: step 1/1. It participates in pyrimidine metabolism; UMP biosynthesis via de novo pathway; (S)-dihydroorotate from bicarbonate: step 1/3. Large subunit of the glutamine-dependent carbamoyl phosphate synthetase (CPSase). CPSase catalyzes the formation of carbamoyl phosphate from the ammonia moiety of glutamine, carbonate, and phosphate donated by ATP, constituting the first step of 2 biosynthetic pathways, one leading to arginine and/or urea and the other to pyrimidine nucleotides. The large subunit (synthetase) binds the substrates ammonia (free or transferred from glutamine from the small subunit), hydrogencarbonate and ATP and carries out an ATP-coupled ligase reaction, activating hydrogencarbonate by forming carboxy phosphate which reacts with ammonia to form carbamoyl phosphate. The polypeptide is Carbamoyl phosphate synthase large chain (Lactobacillus johnsonii (strain CNCM I-12250 / La1 / NCC 533)).